We begin with the raw amino-acid sequence, 148 residues long: UPF0134 protein MPN_410 (148 aa).

This sequence belongs to the UPF0134 family.

In Mycoplasma pneumoniae (strain ATCC 29342 / M129 / Subtype 1) (Mycoplasmoides pneumoniae), this protein is UPF0134 protein MPN_410.